A 283-amino-acid chain; its full sequence is Glutamyl-Q tRNA(Asp) synthetase (283 aa).

L-glutamate contacts are provided by residues 5 to 9 and glutamate 41; that span reads RFAPT. A 'HIGH' region motif is present at residues 8-18; sequence PTPSGPLHLGS. Zn(2+)-binding residues include cysteine 97, cysteine 99, tyrosine 111, and cysteine 115. L-glutamate contacts are provided by tyrosine 168 and arginine 186. The short motif at 224–228 is the 'KMSKS' region element; it reads KLSKQ. An ATP-binding site is contributed by lysine 227.

Belongs to the class-I aminoacyl-tRNA synthetase family. GluQ subfamily. The cofactor is Zn(2+).

Its function is as follows. Catalyzes the tRNA-independent activation of glutamate in presence of ATP and the subsequent transfer of glutamate onto a tRNA(Asp). Glutamate is transferred on the 2-amino-5-(4,5-dihydroxy-2-cyclopenten-1-yl) moiety of the queuosine in the wobble position of the QUC anticodon. In Idiomarina loihiensis (strain ATCC BAA-735 / DSM 15497 / L2-TR), this protein is Glutamyl-Q tRNA(Asp) synthetase.